The following is an 89-amino-acid chain: Small ribosomal subunit protein uS14 (89 aa).

Belongs to the universal ribosomal protein uS14 family. As to quaternary structure, part of the 30S ribosomal subunit. Contacts proteins S3 and S10.

Functionally, binds 16S rRNA, required for the assembly of 30S particles and may also be responsible for determining the conformation of the 16S rRNA at the A site. The chain is Small ribosomal subunit protein uS14 from Amoebophilus asiaticus (strain 5a2).